The following is a 61-amino-acid chain: MNSMHLHAVRYIRVRLQRMRQMAAIQRKERGGPACSRQAPGDRIRFNRRTRCLESEHRAIS.

This is an uncharacterized protein from Treponema pallidum (strain Nichols).